Here is a 203-residue protein sequence, read N- to C-terminus: E3 ubiquitin-protein ligase RNF152 (203 aa).

Residues 12-55 (CQICFNYYSPRRRPKLLDCKHTCCSVCLQQMRTSQKDVRCPWCR) form an RING-type zinc finger. The tract at residues 106-165 (ISKERTLLPGDMGCRLLPGSQQKSLTVVTIPAEQQPLQGGAPQEAVEEEPDRRGVAKSST) is necessary for interaction with RRAGA. The segment at 140 to 159 (QPLQGGAPQEAVEEEPDRRG) is disordered. Residues 167–187 (SGVCTVILVACVLVFLLGIVL) traverse the membrane as a helical segment.

Belongs to the RNF152 family. As to quaternary structure, interacts with RRAGA (inactive GDP-bound form); stimulated by amino acid starvation. Interacts with SEC16A. In terms of processing, ubiquitinated. Autoubiquitinated in vitro, leading to its degradation by the proteasome.

It localises to the lysosome membrane. It catalyses the reaction S-ubiquitinyl-[E2 ubiquitin-conjugating enzyme]-L-cysteine + [acceptor protein]-L-lysine = [E2 ubiquitin-conjugating enzyme]-L-cysteine + N(6)-ubiquitinyl-[acceptor protein]-L-lysine.. It functions in the pathway protein modification; protein ubiquitination. Functionally, E3 ubiquitin-protein ligase that acts as a negative regulator of mTORC1 signaling by mediating ubiquitination of RagA/RRAGA and RHEB. Catalyzes 'Lys-63'-linked polyubiquitination of RagA/RRAGA in response to amino acid starvation, thereby regulating mTORC1 signaling. Also mediates monoubiquitination of RHEB, promoting its association with the TSC-TBC complex and subsequent inhibition. Also mediates 'Lys-48'-linked polyubiquitination of target proteins and their subsequent targeting to the proteasome for degradation. Induces apoptosis when overexpressed. This is E3 ubiquitin-protein ligase RNF152 from Rattus norvegicus (Rat).